Consider the following 89-residue polypeptide: Small ribosomal subunit protein uS17 (89 aa).

Belongs to the universal ribosomal protein uS17 family. As to quaternary structure, part of the 30S ribosomal subunit.

Functionally, one of the primary rRNA binding proteins, it binds specifically to the 5'-end of 16S ribosomal RNA. This chain is Small ribosomal subunit protein uS17, found in Polaromonas sp. (strain JS666 / ATCC BAA-500).